We begin with the raw amino-acid sequence, 380 residues long: MRIVADENIPLLDAFFAHFGEIHRLPGRAMDRAAVADADILLVRSVTAVTRELLEGSPVRFVGTCTIGTDHLDLDWFQQAGIQWASAPGCNARGVVDYVLGSLLTLAEIEGVDLAQRTYGVVGAGQVGARLISVLKALGWNVLVCDPPRQAAEGGDFVSLDEILQRCDVISLHTPLSKTGASPTWHLLDDARLRQLRQGAWLINASRGAVVDNAALHDVLLEREDLQAVLDVWEGEPQVNVALADLCILGTPHIAGYSLDGRQRGTAQIYQALCGFLDQPATIELDDLLPKPWLAQVSLDAACDPVWALNMLCRGVYDPRRDDADFRRSLTGDTASQRLAFDALRKQYPPRREIEGLKVRLEGESEALAQLVRALGAVLV.

Ser-45 and Thr-66 together coordinate substrate. NAD(+)-binding positions include 126-127 (QV), Asp-146, Thr-174, 205-207 (ASR), and Asp-231. Arg-207 is a catalytic residue. Residue Glu-236 is part of the active site. His-253 functions as the Proton donor in the catalytic mechanism. Gly-256 is an NAD(+) binding site. Substrate is bound at residue Tyr-257.

The protein belongs to the D-isomer specific 2-hydroxyacid dehydrogenase family. PdxB subfamily. Homodimer.

It is found in the cytoplasm. It catalyses the reaction 4-phospho-D-erythronate + NAD(+) = (R)-3-hydroxy-2-oxo-4-phosphooxybutanoate + NADH + H(+). It functions in the pathway cofactor biosynthesis; pyridoxine 5'-phosphate biosynthesis; pyridoxine 5'-phosphate from D-erythrose 4-phosphate: step 2/5. Catalyzes the oxidation of erythronate-4-phosphate to 3-hydroxy-2-oxo-4-phosphonooxybutanoate. This Pseudomonas syringae pv. syringae (strain B728a) protein is Erythronate-4-phosphate dehydrogenase.